The chain runs to 492 residues: Probable glycine dehydrogenase (decarboxylating) subunit 2 (492 aa).

N6-(pyridoxal phosphate)lysine is present on K274.

Belongs to the GcvP family. C-terminal subunit subfamily. The glycine cleavage system is composed of four proteins: P, T, L and H. In this organism, the P 'protein' is a heterodimer of two subunits. Pyridoxal 5'-phosphate is required as a cofactor.

It catalyses the reaction N(6)-[(R)-lipoyl]-L-lysyl-[glycine-cleavage complex H protein] + glycine + H(+) = N(6)-[(R)-S(8)-aminomethyldihydrolipoyl]-L-lysyl-[glycine-cleavage complex H protein] + CO2. Functionally, the glycine cleavage system catalyzes the degradation of glycine. The P protein binds the alpha-amino group of glycine through its pyridoxal phosphate cofactor; CO(2) is released and the remaining methylamine moiety is then transferred to the lipoamide cofactor of the H protein. The protein is Probable glycine dehydrogenase (decarboxylating) subunit 2 of Exiguobacterium sibiricum (strain DSM 17290 / CCUG 55495 / CIP 109462 / JCM 13490 / 255-15).